A 353-amino-acid chain; its full sequence is RNA 3'-terminal phosphate cyclase (353 aa).

Residues glutamine 100 and 289-292 contribute to the ATP site; that span reads HMSD. Histidine 315 acts as the Tele-AMP-histidine intermediate in catalysis.

This sequence belongs to the RNA 3'-terminal cyclase family. Type 1 subfamily.

The protein resides in the cytoplasm. It carries out the reaction a 3'-end 3'-phospho-ribonucleotide-RNA + ATP = a 3'-end 2',3'-cyclophospho-ribonucleotide-RNA + AMP + diphosphate. In terms of biological role, catalyzes the conversion of 3'-phosphate to a 2',3'-cyclic phosphodiester at the end of RNA. The mechanism of action of the enzyme occurs in 3 steps: (A) adenylation of the enzyme by ATP; (B) transfer of adenylate to an RNA-N3'P to produce RNA-N3'PP5'A; (C) and attack of the adjacent 2'-hydroxyl on the 3'-phosphorus in the diester linkage to produce the cyclic end product. The biological role of this enzyme is unknown but it is likely to function in some aspects of cellular RNA processing. This chain is RNA 3'-terminal phosphate cyclase, found in Ignicoccus hospitalis (strain KIN4/I / DSM 18386 / JCM 14125).